A 283-amino-acid polypeptide reads, in one-letter code: Alkaline ceramidase (283 aa).

5 residues coordinate Ca(2+): aspartate 28, tryptophan 29, glutamate 31, asparagine 33, and glutamate 42. 2 helical membrane passes run 43 to 63 (FVNT…IMLF) and 69 to 89 (FVTP…LSSM). Histidine 92 is a binding site for Zn(2+). The next 4 helical transmembrane spans lie at 98–118 (IGQL…FSLF), 134–151 (TFSW…GLSW), 154–174 (PIVN…MLYT), and 187–209 (LGIR…RIFC). Histidine 221 and histidine 225 together coordinate Zn(2+). The helical transmembrane segment at 222–242 (GFWHIFIFIAAYTVLVLFAYF) threads the bilayer.

The protein belongs to the alkaline ceramidase family. Zn(2+) is required as a cofactor. In terms of tissue distribution, expressed in the central midgut of late embryos. In brain, it is present at the interhemispheric junction and in groups of cells in the central brain.

The protein localises to the membrane. The enzyme catalyses an N-acylsphing-4-enine + H2O = sphing-4-enine + a fatty acid. Functionally, hydrolyzes the sphingolipid ceramide into sphingosine and free fatty acid. The polypeptide is Alkaline ceramidase (bwa) (Drosophila melanogaster (Fruit fly)).